The following is a 94-amino-acid chain: Neutrophil antibiotic peptide NP-2 (94 aa).

The signal sequence occupies residues 1 to 19; it reads MRTLTLLTALLLLALHTQA. The propeptide occupies 20–62; that stretch reads KSPQGTAEEAPDQEQLVMEDQDISISFGGDKGTALQDADVKAG. 3 cysteine pairs are disulfide-bonded: Cys65–Cys93, Cys67–Cys82, and Cys72–Cys92.

The protein belongs to the alpha-defensin family. In terms of tissue distribution, highest expression in bone marrow and to a much lesser extent in small intestine.

The protein resides in the secreted. Functionally, active in vitro against S.aureus, fungi, Gram-positive and Gram-negative bacteria and to a lesser extent against an enveloped virus. The sequence is that of Neutrophil antibiotic peptide NP-2 (Defa) from Rattus norvegicus (Rat).